Reading from the N-terminus, the 419-residue chain is Protein arginine N-methyltransferase 8-B (419 aa).

Over residues 1–14 (MGLRHSSRCLLLRR) the composition is skewed to basic residues. The disordered stretch occupies residues 1 to 79 (MGLRHSSRCL…HTPHVSALSA (79 aa)). Residue Gly2 is the site of N-myristoyl glycine attachment. Residues 33–63 (QHQQQQSISSIPSSQSLQPSPLPKPVTSVHH) show a composition bias toward low complexity. Position 83 is an omega-N-methylarginine (Arg83). Arg98 is modified (asymmetric dimethylarginine). The 305-residue stretch at 98–402 (RDYYFDSYAH…RDLDFTFELD (305 aa)) folds into the SAM-dependent MTase PRMT-type domain. S-adenosyl-L-methionine contacts are provided by residues His111, Arg120, Gly144, 144–147 (GSGT), Glu166, and Glu195. Residues Glu210 and Glu219 contribute to the active site.

This sequence belongs to the class I-like SAM-binding methyltransferase superfamily. Protein arginine N-methyltransferase family. PRMT8 subfamily. As to quaternary structure, homodimer. Tetramer; individual homodimers associates to form a homotetramer. Homooctamer; individual homodimers associates to form a homooctamer and homooligomerization is required for proper localization to the cell membrane.

Its subcellular location is the cell membrane. It catalyses the reaction L-arginyl-[protein] + S-adenosyl-L-methionine = N(omega)-methyl-L-arginyl-[protein] + S-adenosyl-L-homocysteine + H(+). It carries out the reaction L-arginyl-[protein] + 2 S-adenosyl-L-methionine = N(omega),N(omega)-dimethyl-L-arginyl-[protein] + 2 S-adenosyl-L-homocysteine + 2 H(+). S-adenosyl-L-methionine-dependent and membrane-associated arginine methyltransferase that can both catalyze the formation of omega-N monomethylarginine (MMA) and asymmetrical dimethylarginine (aDMA). The polypeptide is Protein arginine N-methyltransferase 8-B (prmt8b) (Danio rerio (Zebrafish)).